The primary structure comprises 170 residues: Calcineurin subunit B type 1 (170 aa).

A lipid anchor (N-myristoyl glycine) is attached at G2. EF-hand domains are found at residues 18-46, 50-85, 87-122, and 128-163; these read DEIK…FMSL, QQNP…FSVK, DKEQ…MVGN, and QLQQ…LDIH. Ca(2+) is bound by residues D31, D33, S35, S37, E42, D63, D65, N67, E69, E74, D100, D102, D104, Y106, and E111. Y106 bears the Phosphotyrosine mark. Positions 131–136 are calcineurin A binding; that stretch reads QIVDKT. Positions 141, 143, 145, 147, and 152 each coordinate Ca(2+).

Belongs to the calcineurin regulatory subunit family. As to quaternary structure, forms a complex composed of a calmodulin-dependent catalytic subunit (also known as calcineurin A) and a regulatory Ca(2+)-binding subunit (also known as calcineurin B). There are three catalytic subunits, each encoded by a separate gene (PPP3CA, PPP3CB, and PPP3CC) and two regulatory subunits which are also encoded by separate genes (PPP3R1 and PPP3R2). The interaction between the 2 subunits is Ca(2+)-independent. Interacts with catalytic subunit PPP3CA/calcineurin A. Interacts with catalytic subunit PPP3CB/calcineurin A. Interacts with CIB1 (via C-terminal region); the interaction increases upon cardiomyocyte hypertrophy. Interacts with RCAN1. Interacts with SPATA33 (via PQIIIT motif).

Its subcellular location is the cytoplasm. The protein resides in the cytosol. It is found in the cell membrane. The protein localises to the sarcolemma. Its function is as follows. Regulatory subunit of calcineurin, a calcium-dependent, calmodulin stimulated protein phosphatase. Confers calcium sensitivity. In Bos taurus (Bovine), this protein is Calcineurin subunit B type 1 (PPP3R1).